The sequence spans 440 residues: Metacaspase-1 (440 aa).

Residues 1–134 (MFPGSGRKTY…NPQGFGQNSG (134 aa)) are disordered. Positions 14–51 (APPPGPPNGYQYGPPPGAQGQYPPPQGYPPQGYPPQGY) are enriched in pro residues. Over residues 52-81 (PPQGYAPQGYPPQGYAPQGYAPQGYQQQGG) the composition is skewed to low complexity. A compositionally biased stretch (gly residues) spans 82–94 (QQQGGQQQGGQQQ). Residues 98–110 (RQTYATQEAQNFG) show a composition bias toward polar residues. Catalysis depends on residues histidine 230 and cysteine 286.

This sequence belongs to the peptidase C14B family.

In terms of biological role, involved in cell death (apoptosis). The sequence is that of Metacaspase-1 (MCA1) from Debaryomyces hansenii (strain ATCC 36239 / CBS 767 / BCRC 21394 / JCM 1990 / NBRC 0083 / IGC 2968) (Yeast).